Here is a 151-residue protein sequence, read N- to C-terminus: Small ribosomal subunit protein uS15 (151 aa).

This sequence belongs to the universal ribosomal protein uS15 family. As to quaternary structure, component of the small ribosomal subunit.

The protein localises to the cytoplasm. Its function is as follows. Component of the small ribosomal subunit. The ribosome is a large ribonucleoprotein complex responsible for the synthesis of proteins in the cell. The sequence is that of Small ribosomal subunit protein uS15 (rps13) from Xenopus laevis (African clawed frog).